The chain runs to 975 residues: Probable outer membrane protein PmpA (975 aa).

The signal sequence occupies residues 1 to 51; sequence MNRVIEIHAHYDQRQLSQSPNTNFLVHHPYLTLIPKFLLGALIVYAPYSFA. Positions 699–975 constitute an Autotransporter domain; that stretch reads RSLIPTSYFG…SLSCGGYVGF (277 aa).

Belongs to the PMP outer membrane protein family.

Its subcellular location is the secreted. It is found in the cell wall. The protein resides in the cell outer membrane. The protein is Probable outer membrane protein PmpA (pmpA) of Chlamydia trachomatis serovar D (strain ATCC VR-885 / DSM 19411 / UW-3/Cx).